The sequence spans 399 residues: MNKKKILKFICSAVLSFTLFSGYKSYAWDGKVDGTGTHALIVTQAVEILKNDVISTSPLSVKENFKILESNLKKLQRGSTYPDYDPKAYALYQDHFWDPDTDNNFTKDSKWYLAYGINETGESQLRKLFALAKDEWKKGNYEQATWLLGQGLHYFGDFHTPYHPSNVTAVDSAGHTKFETYVEGKKDSYKLHTAGANSVKEFYPTTLQNTNLDNWITEYSRGWAKKAKNMYYAHATMSHSWKDWEIAATETMHNVQIGSAGIIYRFLNEVSGTINTTENSKINEIMVVIKTANEDKAGTDHYIHFGIEAKDGKKYEWTLDNPGNDFEKNQEDSYRINLKDNKLTLQDIAKTWIRKERGAGVRDDWKPEYVKVIINSDVKYQANINEWFGDNKTFYINNK.

The N-terminal stretch at 1-28 (MNKKKILKFICSAVLSFTLFSGYKSYAW) is a signal peptide. Zn(2+)-binding residues include Trp-28, His-38, Asp-83, His-95, His-153, Asp-157, His-163, His-175, and Glu-179. In terms of domain architecture, Zn-dependent PLC spans 29 to 277 (DGKVDGTGTH…NEVSGTINTT (249 aa)). The segment at 275 to 282 (NTTENSKI) is linker. A PLAT domain is found at 283-399 (NEIMVVIKTA…DNKTFYINNK (117 aa)). Gly-298, Thr-299, Asp-300, Asp-320, Asn-321, Gly-323, Asn-324, Asp-325, and Asp-363 together coordinate Ca(2+).

The protein belongs to the bacterial zinc-metallophospholipase C family. Ca(2+) is required as a cofactor. Requires Zn(2+) as cofactor.

Its subcellular location is the secreted. The enzyme catalyses a 1,2-diacyl-sn-glycero-3-phosphocholine + H2O = phosphocholine + a 1,2-diacyl-sn-glycerol + H(+). Its function is as follows. Bacterial hemolysins are exotoxins that attack blood cell membranes and cause cell rupture. Binds to eukaryotic membranes where it hydrolyzes phosphatidylcholine, sphingomyelin and phosphatidylethanolamine. The diacylglycerol produced can activate both the arachidonic acid pathway, leading to modulation of the inflammatory response cascade and thrombosis, and protein kinase C, leading to activation of eukaryotic phospholipases and further membrane damage. The polypeptide is Phospholipase C (plc) (Clostridium haemolyticum).